The chain runs to 162 residues: Ribosome maturation factor RimP (162 aa).

Belongs to the RimP family.

The protein resides in the cytoplasm. Its function is as follows. Required for maturation of 30S ribosomal subunits. The sequence is that of Ribosome maturation factor RimP from Leptospira borgpetersenii serovar Hardjo-bovis (strain JB197).